The chain runs to 411 residues: ATPase GET3B (411 aa).

Residues 1-67 (MATLSSYLLS…RRRNSLQVKS (67 aa)) constitute a chloroplast transit peptide. 95-102 (KGGVGKTS) contacts ATP. The active site involves D124. N348 is a binding site for ATP.

The protein belongs to the arsA ATPase family.

It is found in the plastid. It localises to the chloroplast stroma. It catalyses the reaction ATP + H2O = ADP + phosphate + H(+). The polypeptide is ATPase GET3B (Arabidopsis thaliana (Mouse-ear cress)).